The chain runs to 687 residues: Ribonuclease E (687 aa).

The 83-residue stretch at 35–117 (GDIYLGVVEN…LTGNITLPGR (83 aa)) folds into the S1 motif domain. 2 residues coordinate Mg(2+): Asp-296 and Asp-339. Cys-397 and Cys-400 together coordinate Zn(2+). The segment at 650-687 (PIKLTETMEESEVNAASTANRRRRRRSSASDSDTGEDS) is disordered. The C4 Arg-rich motif, necessary and sufficient to confer PNPase binding on another protein signature appears at 670–678 (RRRRRRSSA).

This sequence belongs to the RNase E/G family. May form homodimers or higher order multimers. Interacts with polynucleotide phosphorylase (PNPase, pnp) via the C4 Arg-rich motif (residues 670-678). A homotetramer formed by a dimer of dimers. Mg(2+) serves as cofactor. It depends on Zn(2+) as a cofactor.

The protein localises to the cytoplasm. It catalyses the reaction Endonucleolytic cleavage of single-stranded RNA in A- and U-rich regions.. In terms of biological role, endoribonuclease that plays a central role in rRNA and tRNA processing and mRNA decay. Has been shown to act on 9S rRNA (the precursor of 5S rRNA). The protein is Ribonuclease E of Nostoc sp. (strain PCC 7120 / SAG 25.82 / UTEX 2576).